The primary structure comprises 766 residues: Darlin (766 aa).

ARM repeat units follow at residues 82 to 119, 167 to 208, 423 to 464, and 465 to 537; these read QLFE…NLTY, DFIQ…NLVD, EPNC…NLTL, and PTIN…ASMD. The interval 561-585 is disordered; that stretch reads EEKEKTIEKTDEKTDEKTNEKKQSK. The stretch at 610–649 is one ARM 5 repeat; the sequence is HQEKMKQLIEESVEPFFSLLQSPFPILQVEGAKGLVLLIK.

The protein belongs to the RAP1GDS1 family. As to quaternary structure, binds to small GTPases racE, racC but not rab21. Binds preferentially to GDP-bound racE.

Part of a signaling pathway that initiates the aggregation and leads to the formation of aggregation centers or streams. Not essential for cytokinesis, pinocytosis or phagocytosis. Not essential for development, except in starvation-induced aggregation. In Dictyostelium discoideum (Social amoeba), this protein is Darlin (darA).